The chain runs to 215 residues: MATAWESEYFDKVTPGERERAVPPMVPQQTPPPVYIQPQVSRNGIVASIVLRLLTLIFAVVALAVLASNTGSFQVSTGSATSVKTIKFTILSAFTYLFAVCGVVAVYSLLLIIVEMIDLAVRGFTTHTLVAIFVFVLDQTMAYVLISAASASANGVKVSRDESNITGYKFDISCSNLGIDDYCTKASASVAIAFIAFLFMAITAGVSARRLFKLP.

Over 1–44 (MATAWESEYFDKVTPGERERAVPPMVPQQTPPPVYIQPQVSRNG) the chain is Cytoplasmic. The helical transmembrane segment at 45–65 (IVASIVLRLLTLIFAVVALAV) threads the bilayer. The Extracellular segment spans residues 66 to 93 (LASNTGSFQVSTGSATSVKTIKFTILSA). Residues 94-114 (FTYLFAVCGVVAVYSLLLIIV) form a helical membrane-spanning segment. At 115–128 (EMIDLAVRGFTTHT) the chain is on the cytoplasmic side. Residues 129-149 (LVAIFVFVLDQTMAYVLISAA) traverse the membrane as a helical segment. Residues 150–185 (SASANGVKVSRDESNITGYKFDISCSNLGIDDYCTK) are Extracellular-facing. N-linked (GlcNAc...) asparagine glycosylation is present at asparagine 164. Residues 186–206 (ASASVAIAFIAFLFMAITAGV) form a helical membrane-spanning segment. Over 207-215 (SARRLFKLP) the chain is Cytoplasmic.

This sequence belongs to the Casparian strip membrane proteins (CASP) family. In terms of assembly, homodimer and heterodimers.

It localises to the cell membrane. The polypeptide is CASP-like protein UU3 (Physcomitrium patens (Spreading-leaved earth moss)).